A 463-amino-acid chain; its full sequence is MVSPDDSPEIRDRPRPRRCLLPASVTVEPVIFLSMFALALQGPLATQYLWDRLSADIGFNGTRTVGCAMNGSKSAGPEQQEVETLTAHWSLYINLGGFLVGLFSVMLLGPWSDKVGRRPVLMLPCIGLALQAAVYLLVMYQELHVGYFLIGRFISGISGDFNMILAGCFAYIADVSDRQSRTFRVAVLEACLGIAGMVASIIGGHWRKAQGYINPFWLVFAVNLFTALYVYFCVEESVKDKKPARLFTHRHYQSFFRLFTVQGENNRRRKLFLYSLALLVVVTVHMGAKNLFVLYELSYPLCWDSDLIGYGSAAEHLTYLSSLAGLRLFQLCLADSWVAEMGFISNISGLVVISLASTTPIMFTGYGLRFFAMATTPVIRSKLSKMVEEGEQGALFSSVACVEGLSFLLATGLFNSLYPATLHFMKGFPFLLGALLLLIPAGIIGLIEVCEQKPMYSQFSEIS.

Topologically, residues 1–27 (MVSPDDSPEIRDRPRPRRCLLPASVTV) are cytoplasmic. The helical transmembrane segment at 28–46 (EPVIFLSMFALALQGPLAT) threads the bilayer. The Extracellular portion of the chain corresponds to 47–86 (QYLWDRLSADIGFNGTRTVGCAMNGSKSAGPEQQEVETLT). N-linked (GlcNAc...) asparagine glycosylation is found at asparagine 60 and asparagine 70. Cysteine 67 and cysteine 302 are oxidised to a cystine. Residues 87–112 (AHWSLYINLGGFLVGLFSVMLLGPWS) form a helical membrane-spanning segment. Residues 113–116 (DKVG) lie on the Cytoplasmic side of the membrane. A helical transmembrane segment spans residues 117-139 (RRPVLMLPCIGLALQAAVYLLVM). Residues 140 to 144 (YQELH) are Extracellular-facing. Residues 145–158 (VGYFLIGRFISGIS) traverse the membrane as a helical segment. The Cytoplasmic portion of the chain corresponds to 159-181 (GDFNMILAGCFAYIADVSDRQSR). The H(+) site is built by aspartate 160 and glutamate 189. Residues 182-207 (TFRVAVLEACLGIAGMVASIIGGHWR) form a helical membrane-spanning segment. Residues 208–212 (KAQGY) lie on the Extracellular side of the membrane. A helical transmembrane segment spans residues 213 to 231 (INPFWLVFAVNLFTALYVY). Residues 232–270 (FCVEESVKDKKPARLFTHRHYQSFFRLFTVQGENNRRRK) are Cytoplasmic-facing. The helical transmembrane segment at 271 to 293 (LFLYSLALLVVVTVHMGAKNLFV) threads the bilayer. Histidine 285 provides a ligand contact to H(+). Residues 294-306 (LYELSYPLCWDSD) lie on the Extracellular side of the membrane. The chain crosses the membrane as a helical span at residues 307–329 (LIGYGSAAEHLTYLSSLAGLRLF). Residues 330-335 (QLCLAD) are Cytoplasmic-facing. A helical membrane pass occupies residues 336 to 355 (SWVAEMGFISNISGLVVISL). Residues 356 to 359 (ASTT) lie on the Extracellular side of the membrane. A helical membrane pass occupies residues 360–380 (PIMFTGYGLRFFAMATTPVIR). The Cytoplasmic portion of the chain corresponds to 381 to 392 (SKLSKMVEEGEQ). A helical membrane pass occupies residues 393 to 418 (GALFSSVACVEGLSFLLATGLFNSLY). At 419 to 426 (PATLHFMK) the chain is on the extracellular side. Residues 427 to 445 (GFPFLLGALLLLIPAGIIG) form a helical membrane-spanning segment. The Cytoplasmic portion of the chain corresponds to 446 to 463 (LIEVCEQKPMYSQFSEIS).

The protein belongs to the major facilitator superfamily. SLC46A family. Monomer.

It is found in the cell membrane. It localises to the apical cell membrane. The protein localises to the basolateral cell membrane. Its subcellular location is the endosome membrane. The protein resides in the cytoplasm. The enzyme catalyses folate(in) + H(+)(in) = folate(out) + H(+)(out). The catalysed reaction is (6S)-5-methyl-5,6,7,8-tetrahydrofolate(in) + H(+)(in) = (6S)-5-methyl-5,6,7,8-tetrahydrofolate(out) + H(+)(out). It catalyses the reaction methotrexate(in) + H(+)(in) = methotrexate(out) + H(+)(out). It carries out the reaction pemetrexed(in) + H(+)(in) = pemetrexed(out) + H(+)(out). Functionally, proton-coupled folate symporter that mediates folate absorption using an H(+) gradient as a driving force. Involved in the intestinal absorption of folates at the brush-border membrane of the proximal jejunum, and the transport from blood to cerebrospinal fluid across the choroid plexus. Functions at acidic pH via alternate outward- and inward-open conformation states. Protonation of residues in the outward open state primes the protein for transport. Binding of folate promotes breaking of salt bridge network and subsequent closure of the extracellular gate, leading to the inward-open state and release of protons and folate. Also able to transport antifolate drugs, such as methotrexate and pemetrexed. Also acts as a lower-affinity, pH-independent heme carrier protein and constitutes the main importer of heme in the intestine. Imports heme in the retina and retinal pigment epithelium, in neurons of the hippocampus, in hepatocytes and in the renal epithelial cells. The chain is Proton-coupled folate transporter from Xenopus laevis (African clawed frog).